A 202-amino-acid polypeptide reads, in one-letter code: Ribosome maturation factor RimM (202 aa).

One can recognise a PRC barrel domain in the interval 121-202; sequence KDEYYWVDLI…CITVDWQPDY (82 aa).

It belongs to the RimM family. As to quaternary structure, binds ribosomal protein uS19.

It localises to the cytoplasm. An accessory protein needed during the final step in the assembly of 30S ribosomal subunit, possibly for assembly of the head region. Essential for efficient processing of 16S rRNA. May be needed both before and after RbfA during the maturation of 16S rRNA. It has affinity for free ribosomal 30S subunits but not for 70S ribosomes. This Polaromonas sp. (strain JS666 / ATCC BAA-500) protein is Ribosome maturation factor RimM.